The primary structure comprises 448 residues: Eukaryotic translation initiation factor 3 subunit E (448 aa).

One can recognise a PCI domain in the interval 254-423; the sequence is TDLFFSPAYI…GTVIMNHPPQ (170 aa).

This sequence belongs to the eIF-3 subunit E family. In terms of assembly, component of the eukaryotic translation initiation factor 3 (eIF-3) complex.

It is found in the cytoplasm. Functionally, component of the eukaryotic translation initiation factor 3 (eIF-3) complex, which is involved in protein synthesis of a specialized repertoire of mRNAs and, together with other initiation factors, stimulates binding of mRNA and methionyl-tRNAi to the 40S ribosome. The eIF-3 complex specifically targets and initiates translation of a subset of mRNAs involved in cell proliferation. The chain is Eukaryotic translation initiation factor 3 subunit E (int6) from Emericella nidulans (strain FGSC A4 / ATCC 38163 / CBS 112.46 / NRRL 194 / M139) (Aspergillus nidulans).